Reading from the N-terminus, the 349-residue chain is Probable G-protein coupled receptor 21 (349 aa).

At 1–32 the chain is on the extracellular side; it reads MNSTWDGNQSSHPFCLLALGYLETVRFCLLEV. N-linked (GlcNAc...) asparagine glycans are attached at residues N2 and N8. A helical membrane pass occupies residues 33-53; it reads LIIVFLTVLIISGNIIVIFVF. Over 54 to 75 the chain is Cytoplasmic; that stretch reads HCAPLLNHHSTSYFIQTMAYAD. Residues 76–96 traverse the membrane as a helical segment; sequence LLVGVSCLVPSLSLLYYPLPI. The Extracellular segment spans residues 97-104; sequence EEAMTCQV. Residues 105–125 traverse the membrane as a helical segment; that stretch reads FGFVVSVLKSISMASLACISI. The Cytoplasmic portion of the chain corresponds to 126–147; that stretch reads DRYIAITKPLTYNTLVTPWRLR. Residues 148 to 168 traverse the membrane as a helical segment; it reads LCIFLIWLYSTLVFLPSFFHW. At 169–191 the chain is on the extracellular side; sequence GKPGYHGDVFQWCAESWHTNSYF. Residues 192 to 212 form a helical membrane-spanning segment; sequence TLFIVMMLYAPAALIVCFTYF. Residues 213 to 252 are Cytoplasmic-facing; that stretch reads NIFRICQQHTKEISERQARFSSQNGETGEPQTCPDKRYAM. A helical transmembrane segment spans residues 253–273; that stretch reads VLFRITSVFYVLWLPYIIYFL. At 274 to 283 the chain is on the extracellular side; it reads LESSTGCSSR. The helical transmembrane segment at 284–304 threads the bilayer; it reads LASFLTTWLAISNSFCNCIIY. At 305–349 the chain is on the cytoplasmic side; that stretch reads SLSNSVFQRGLKGLSGSLCTSCASHTTAKDPYTVRCKGPPNGSHI.

Belongs to the G-protein coupled receptor 1 family.

The protein resides in the cell membrane. Its function is as follows. Orphan receptor. The protein is Probable G-protein coupled receptor 21 (Gpr21) of Mus musculus (Mouse).